Consider the following 403-residue polypeptide: Nuclear receptor subfamily 2 group F member 5 (403 aa).

The disordered stretch occupies residues 16–44 (PGSQLQMCSQEPGGTPGTPSGSTPGNDAL). The segment at residues 51-126 (NVDCMVCGDK…VGMRREAVQR (76 aa)) is a DNA-binding region (nuclear receptor). NR C4-type zinc fingers lie at residues 54–74 (CMVC…CEGC) and 90–114 (CRGN…LKKC). The NR LBD domain maps to 152–378 (YLSGFISLLL…TLLRDMLLSG (227 aa)).

The protein belongs to the nuclear hormone receptor family. NR2 subfamily.

It is found in the nucleus. Putative receptor that is required in photoreceptor cells precursors during eye development. The protein is Nuclear receptor subfamily 2 group F member 5 (nr2f5) of Danio rerio (Zebrafish).